The sequence spans 397 residues: Phosphoglycerate kinase (397 aa).

Substrate is bound by residues 23–25 (DLN), Arg38, 61–64 (HLGR), Arg119, and Arg152. ATP-binding positions include Lys202, Glu324, and 354-357 (GGDT).

It belongs to the phosphoglycerate kinase family. In terms of assembly, monomer.

The protein resides in the cytoplasm. It catalyses the reaction (2R)-3-phosphoglycerate + ATP = (2R)-3-phospho-glyceroyl phosphate + ADP. The protein operates within carbohydrate degradation; glycolysis; pyruvate from D-glyceraldehyde 3-phosphate: step 2/5. The polypeptide is Phosphoglycerate kinase (pgk) (Xanthobacter flavus).